The chain runs to 81 residues: UPF0180 protein BLi01634/BL05144 (81 aa).

This sequence belongs to the UPF0180 family.

This Bacillus licheniformis (strain ATCC 14580 / DSM 13 / JCM 2505 / CCUG 7422 / NBRC 12200 / NCIMB 9375 / NCTC 10341 / NRRL NRS-1264 / Gibson 46) protein is UPF0180 protein BLi01634/BL05144.